We begin with the raw amino-acid sequence, 286 residues long: Putative transcription factor kapC (286 aa).

Residues 1–10 show a composition bias toward pro residues; the sequence is MQPALAPAPH. A disordered region spans residues 1-120; it reads MQPALAPAPH…QNRAAQRAFR (120 aa). The segment covering 26 to 40 has biased composition (low complexity); sequence HDQLLAAHQHLSHPQ. Over residues 41 to 54 the composition is skewed to pro residues; that stretch reads QPRPQAPATQPPHM. Residues 55–67 show a composition bias toward polar residues; the sequence is QPNTASPRDQNNI. The segment covering 81-92 has biased composition (pro residues); that stretch reads PQTPPQPEPAPQ. The bZIP domain occupies 102–165; that stretch reads PLSTSKRAAQ…EYIINLQTRL (64 aa). Positions 103–126 are basic motif; sequence LSTSKRAAQNRAAQRAFRQRKESY. Residues 108–118 show a composition bias toward low complexity; sequence RAAQNRAAQRA. A leucine-zipper region spans residues 130–161; sequence LEEQVKHQEAITEEYKALHAENYQLREYIINL. Residues 197–286 are disordered; sequence RGNAASAGPA…QEPDGLPVVS (90 aa). Residues 198–222 show a composition bias toward low complexity; it reads GNAASAGPAPAGPGPQQSQPNQNQG.

Belongs to the bZIP family.

It is found in the nucleus. In terms of biological role, putative transcription factor. In Aspergillus terreus (strain NIH 2624 / FGSC A1156), this protein is Putative transcription factor kapC (kapC).